Reading from the N-terminus, the 573-residue chain is Sulfate adenylyltransferase (573 aa).

The segment at 1–169 (MANSPHGGVL…IEAVNKLNHY (169 aa)) is N-terminal. The catalytic stretch occupies residues 170-394 (DYVALRYTPA…LRESSPPRHT (225 aa)). A sulfate-binding site is contributed by Q197. ATP is bound by residues 197–200 (QTRN) and 291–294 (GRDH). Catalysis depends on residues T198, R199, and N200. A sulfate-binding site is contributed by R199. A295 contributes to the sulfate binding site. V333 provides a ligand contact to ATP. The tract at residues 395-573 (QGFTVFLTGY…LETEGFFDRA (179 aa)) is allosteric regulation domain; adenylyl-sulfate kinase-like. 3'-phosphoadenylyl sulfate contacts are provided by residues 434–437 (DTVR), R451, 477–478 (IA), and R515.

In the N-terminal section; belongs to the sulfate adenylyltransferase family. It in the C-terminal section; belongs to the APS kinase family. In terms of assembly, homohexamer. Dimer of trimers.

The protein localises to the cytoplasm. The catalysed reaction is sulfate + ATP + H(+) = adenosine 5'-phosphosulfate + diphosphate. Its pathway is sulfur metabolism; hydrogen sulfide biosynthesis; sulfite from sulfate: step 1/3. Its activity is regulated as follows. Allosterically inhibited by 3'-phosphoadenosine 5'-phosphosulfate (PAPS). Its function is as follows. Catalyzes the first intracellular reaction of sulfate assimilation, forming adenosine-5'-phosphosulfate (APS) from inorganic sulfate and ATP. Plays an important role in sulfate activation as a component of the biosynthesis pathway of sulfur-containing amino acids. This Aspergillus oryzae (strain ATCC 42149 / RIB 40) (Yellow koji mold) protein is Sulfate adenylyltransferase.